An 85-amino-acid chain; its full sequence is U4-theraphotoxin-Hhn1t (85 aa).

The signal sequence occupies residues 1 to 22 (MKVTLIAILTCAAVLVLHTTAA). Residues 23–48 (EELEAESQLMEVGMPDTELAAVDEER) constitute a propeptide that is removed on maturation. 3 disulfides stabilise this stretch: Cys-52/Cys-66, Cys-56/Cys-77, and Cys-71/Cys-82.

It belongs to the neurotoxin 12 (Hwtx-2) family. 02 (Hwtx-2) subfamily. Expressed by the venom gland.

The protein localises to the secreted. In terms of biological role, postsynaptic neurotoxin. This Cyriopagopus hainanus (Chinese bird spider) protein is U4-theraphotoxin-Hhn1t.